A 152-amino-acid chain; its full sequence is Transcriptional repressor NrdR (152 aa).

The tract at residues 1 to 21 is disordered; that stretch reads MRCPFCGNGDTQVKDSRPTED. A zinc finger spans residues 3-34; sequence CPFCGNGDTQVKDSRPTEDSAAIRRRRFCPAC. The span at 12–21 shows a compositional bias: basic and acidic residues; sequence QVKDSRPTED. In terms of domain architecture, ATP-cone spans 49–139; the sequence is LVIVKKDGQR…VYRNFREAKD (91 aa).

The protein belongs to the NrdR family. Zn(2+) is required as a cofactor.

Functionally, negatively regulates transcription of bacterial ribonucleotide reductase nrd genes and operons by binding to NrdR-boxes. In Rhodospirillum rubrum (strain ATCC 11170 / ATH 1.1.1 / DSM 467 / LMG 4362 / NCIMB 8255 / S1), this protein is Transcriptional repressor NrdR.